A 203-amino-acid polypeptide reads, in one-letter code: MPGPLTCTPAWQGQGRAAAFLCCSFQRAGAVVGVPARWHRGRLSSQQRLRSSLGGSHPCPQLGRRLVREGVISVPRQQGRRRCRESFSPADVAPGPICSANICLSGVRFLTCLNRVREHVVGPSPSPAAPICFFPVVEALCTLRGRRCHCLPFPKRGMQRWMLPLRRGARLLPLASSKNPRARSPGLDPLGSSETLWSHRGGH.

Positions 174 to 203 (LASSKNPRARSPGLDPLGSSETLWSHRGGH) are disordered.

This is an uncharacterized protein from Homo sapiens (Human).